The primary structure comprises 90 residues: Small ribosomal subunit protein bS20 (90 aa).

The tract at residues methionine 1–alanine 27 is disordered.

It belongs to the bacterial ribosomal protein bS20 family.

In terms of biological role, binds directly to 16S ribosomal RNA. The sequence is that of Small ribosomal subunit protein bS20 from Coxiella burnetii (strain CbuK_Q154) (Coxiella burnetii (strain Q154)).